The sequence spans 201 residues: Translation initiation factor IF-3 (201 aa).

The disordered stretch occupies residues 170–201; it reads TPKSASKKGHTPPKTQVEASKQANESAETEEE. Polar residues predominate over residues 182–195; it reads PKTQVEASKQANES.

The protein belongs to the IF-3 family. In terms of assembly, monomer.

The protein localises to the cytoplasm. Its function is as follows. IF-3 binds to the 30S ribosomal subunit and shifts the equilibrium between 70S ribosomes and their 50S and 30S subunits in favor of the free subunits, thus enhancing the availability of 30S subunits on which protein synthesis initiation begins. This Porphyromonas gingivalis (strain ATCC BAA-308 / W83) protein is Translation initiation factor IF-3.